Here is a 385-residue protein sequence, read N- to C-terminus: NADH-quinone oxidoreductase subunit H (385 aa).

Helical transmembrane passes span 14 to 34, 80 to 100, 130 to 150, 172 to 192, 219 to 239, 280 to 300, 325 to 345, and 365 to 385; these read GLKLVVIFLMMVQAVPILVWL, FLYYAAPIFALIPGAVAFSAI, IGVGIVFILGVSSLAAYTLLM, ISYELALGLSIVGVIMLYGTF, LPNWGIFYQPVGALLFFSAAF, MMIASGLMVLFFFGGYTIPYV, LIHFLVFNIKFGFFMWVFIWV, and MLPWALANTIITAFVIYIASL.

It belongs to the complex I subunit 1 family. As to quaternary structure, NDH-1 is composed of 14 different subunits. Subunits NuoA, H, J, K, L, M, N constitute the membrane sector of the complex.

The protein resides in the cell inner membrane. The enzyme catalyses a quinone + NADH + 5 H(+)(in) = a quinol + NAD(+) + 4 H(+)(out). In terms of biological role, NDH-1 shuttles electrons from NADH, via FMN and iron-sulfur (Fe-S) centers, to quinones in the respiratory chain. The immediate electron acceptor for the enzyme in this species is believed to be ubiquinone. Couples the redox reaction to proton translocation (for every two electrons transferred, four hydrogen ions are translocated across the cytoplasmic membrane), and thus conserves the redox energy in a proton gradient. This subunit may bind ubiquinone. This is NADH-quinone oxidoreductase subunit H from Bdellovibrio bacteriovorus (strain ATCC 15356 / DSM 50701 / NCIMB 9529 / HD100).